A 358-amino-acid chain; its full sequence is 3-isopropylmalate dehydrogenase (358 aa).

The substrate site is built by Arg92, Arg102, Arg130, and Asp224. The Mg(2+) site is built by Asp224, Asp248, and Asp252. 282-294 lines the NAD(+) pocket; that stretch reads GSAPDIAGQGIAN.

The protein belongs to the isocitrate and isopropylmalate dehydrogenases family. LeuB type 1 subfamily. In terms of assembly, homodimer. Mg(2+) serves as cofactor. Requires Mn(2+) as cofactor.

Its subcellular location is the cytoplasm. The enzyme catalyses (2R,3S)-3-isopropylmalate + NAD(+) = 4-methyl-2-oxopentanoate + CO2 + NADH. Its pathway is amino-acid biosynthesis; L-leucine biosynthesis; L-leucine from 3-methyl-2-oxobutanoate: step 3/4. Functionally, catalyzes the oxidation of 3-carboxy-2-hydroxy-4-methylpentanoate (3-isopropylmalate) to 3-carboxy-4-methyl-2-oxopentanoate. The product decarboxylates to 4-methyl-2 oxopentanoate. The polypeptide is 3-isopropylmalate dehydrogenase (Bordetella avium (strain 197N)).